We begin with the raw amino-acid sequence, 485 residues long: Aspartyl/glutamyl-tRNA(Asn/Gln) amidotransferase subunit B (485 aa).

Belongs to the GatB/GatE family. GatB subfamily. In terms of assembly, heterotrimer of A, B and C subunits.

The enzyme catalyses L-glutamyl-tRNA(Gln) + L-glutamine + ATP + H2O = L-glutaminyl-tRNA(Gln) + L-glutamate + ADP + phosphate + H(+). It catalyses the reaction L-aspartyl-tRNA(Asn) + L-glutamine + ATP + H2O = L-asparaginyl-tRNA(Asn) + L-glutamate + ADP + phosphate + 2 H(+). Allows the formation of correctly charged Asn-tRNA(Asn) or Gln-tRNA(Gln) through the transamidation of misacylated Asp-tRNA(Asn) or Glu-tRNA(Gln) in organisms which lack either or both of asparaginyl-tRNA or glutaminyl-tRNA synthetases. The reaction takes place in the presence of glutamine and ATP through an activated phospho-Asp-tRNA(Asn) or phospho-Glu-tRNA(Gln). In Paramagnetospirillum magneticum (strain ATCC 700264 / AMB-1) (Magnetospirillum magneticum), this protein is Aspartyl/glutamyl-tRNA(Asn/Gln) amidotransferase subunit B.